Reading from the N-terminus, the 202-residue chain is 3-isopropylmalate dehydratase small subunit (202 aa).

The protein belongs to the LeuD family. LeuD type 1 subfamily. Heterodimer of LeuC and LeuD.

It carries out the reaction (2R,3S)-3-isopropylmalate = (2S)-2-isopropylmalate. The protein operates within amino-acid biosynthesis; L-leucine biosynthesis; L-leucine from 3-methyl-2-oxobutanoate: step 2/4. Catalyzes the isomerization between 2-isopropylmalate and 3-isopropylmalate, via the formation of 2-isopropylmaleate. The protein is 3-isopropylmalate dehydratase small subunit of Rhizobium etli (strain CIAT 652).